The following is a 135-amino-acid chain: Fluoride-specific ion channel FluC 2 (135 aa).

A run of 4 helical transmembrane segments spans residues 5 to 25 (VLAA…GLLA), 36 to 56 (WGTV…METL), 68 to 88 (PFLG…ITDA), and 100 to 120 (ALLA…AAAG). Residues Gly-76 and Thr-79 each contribute to the Na(+) site.

The protein belongs to the fluoride channel Fluc/FEX (TC 1.A.43) family.

The protein resides in the cell membrane. It catalyses the reaction fluoride(in) = fluoride(out). With respect to regulation, na(+) is not transported, but it plays an essential structural role and its presence is essential for fluoride channel function. Functionally, fluoride-specific ion channel. Important for reducing fluoride concentration in the cell, thus reducing its toxicity. In Thermobifida fusca (strain YX), this protein is Fluoride-specific ion channel FluC 2.